The chain runs to 55 residues: MAKATDVRPKITLACVECKERNYITRKNRRNDPDRIELKKFCPRDGRHTIHRETR.

It belongs to the bacterial ribosomal protein bL33 family.

This Salinispora arenicola (strain CNS-205) protein is Large ribosomal subunit protein bL33B.